A 291-amino-acid chain; its full sequence is Elongation factor Ts (291 aa).

The segment at 80-83 (TDFV) is involved in Mg(2+) ion dislocation from EF-Tu.

Belongs to the EF-Ts family.

Its subcellular location is the cytoplasm. Functionally, associates with the EF-Tu.GDP complex and induces the exchange of GDP to GTP. It remains bound to the aminoacyl-tRNA.EF-Tu.GTP complex up to the GTP hydrolysis stage on the ribosome. The chain is Elongation factor Ts from Acinetobacter baylyi (strain ATCC 33305 / BD413 / ADP1).